Here is a 159-residue protein sequence, read N- to C-terminus: Siroheme decarboxylase beta subunit (159 aa).

152–157 (KTSMTY) serves as a coordination point for substrate.

The protein belongs to the Ahb/Nir family. Forms a heterodimer composed of AhbA and AhbB.

The catalysed reaction is siroheme + 2 H(+) = 12,18-didecarboxysiroheme + 2 CO2. It functions in the pathway porphyrin-containing compound metabolism; protoheme biosynthesis. Involved in siroheme-dependent heme b biosynthesis. Catalyzes the decarboxylation of siroheme into didecarboxysiroheme. Siroheme is decarboxylated to monodecarboxysiroheme, which is in turn decarboxylated to didecarboxysiroheme. The sequence is that of Siroheme decarboxylase beta subunit from Desulfovibrio desulfuricans (strain ATCC 27774 / DSM 6949 / MB).